A 312-amino-acid chain; its full sequence is Putative 1-aminocyclopropane-1-carboxylate deaminase (312 aa).

K42 is subject to N6-(pyridoxal phosphate)lysine.

The protein belongs to the ACC deaminase/D-cysteine desulfhydrase family. The cofactor is pyridoxal 5'-phosphate.

The catalysed reaction is 1-aminocyclopropane-1-carboxylate + H2O = 2-oxobutanoate + NH4(+). The polypeptide is Putative 1-aminocyclopropane-1-carboxylate deaminase (Thermotoga maritima (strain ATCC 43589 / DSM 3109 / JCM 10099 / NBRC 100826 / MSB8)).